A 24-amino-acid polypeptide reads, in one-letter code: Heat shock 70 kDa protein 4L (24 aa).

Thr19 carries the phosphothreonine modification.

The protein belongs to the heat shock protein 70 family. As to quaternary structure, homodimer. In the testis, forms a complex with p53 at 32.5 degrees Celsius which is scrotal temperature but not at 37 or 42 degrees Celsius. Expressed at high levels in testis and at much lower levels in brain. In testis, expressed mainly in germ cells. Widespread in brain with highest expression in cerebellum and medulla oblongata. Also expressed in renal medulla of water-restricted animals.

Its subcellular location is the cytoplasm. The protein localises to the nucleus. In terms of biological role, possesses chaperone activity in vitro where it inhibits aggregation of citrate synthase. This Rattus norvegicus (Rat) protein is Heat shock 70 kDa protein 4L (Hspa4l).